Here is a 683-residue protein sequence, read N- to C-terminus: DNA ligase 2 (683 aa).

NAD(+) contacts are provided by residues Asp27 to Asp31, Ser76 to Leu77, and Glu106. Lys108 acts as the N6-AMP-lysine intermediate in catalysis. Residues Arg129, Glu169, Lys285, and Lys309 each contribute to the NAD(+) site. Cys403, Cys406, Cys422, and Cys428 together coordinate Zn(2+). Residues Ser592 to Glu681 enclose the BRCT domain.

This sequence belongs to the NAD-dependent DNA ligase family. LigA subfamily. It depends on Mg(2+) as a cofactor. Mn(2+) is required as a cofactor.

The enzyme catalyses NAD(+) + (deoxyribonucleotide)n-3'-hydroxyl + 5'-phospho-(deoxyribonucleotide)m = (deoxyribonucleotide)n+m + AMP + beta-nicotinamide D-nucleotide.. In terms of biological role, DNA ligase that catalyzes the formation of phosphodiester linkages between 5'-phosphoryl and 3'-hydroxyl groups in double-stranded DNA using NAD as a coenzyme and as the energy source for the reaction. It is essential for DNA replication and repair of damaged DNA. The polypeptide is DNA ligase 2 (Nocardia farcinica (strain IFM 10152)).